We begin with the raw amino-acid sequence, 482 residues long: Methylenetetrahydrofolate--tRNA-(uracil-5-)-methyltransferase TrmFO (482 aa).

Glycine 11–glycine 16 contributes to the FAD binding site. Residues leucine 450–glutamate 482 are disordered.

It belongs to the MnmG family. TrmFO subfamily. It depends on FAD as a cofactor.

Its subcellular location is the cytoplasm. The enzyme catalyses uridine(54) in tRNA + (6R)-5,10-methylene-5,6,7,8-tetrahydrofolate + NADH + H(+) = 5-methyluridine(54) in tRNA + (6S)-5,6,7,8-tetrahydrofolate + NAD(+). It carries out the reaction uridine(54) in tRNA + (6R)-5,10-methylene-5,6,7,8-tetrahydrofolate + NADPH + H(+) = 5-methyluridine(54) in tRNA + (6S)-5,6,7,8-tetrahydrofolate + NADP(+). Catalyzes the folate-dependent formation of 5-methyl-uridine at position 54 (M-5-U54) in all tRNAs. The chain is Methylenetetrahydrofolate--tRNA-(uracil-5-)-methyltransferase TrmFO from Rhodospirillum rubrum (strain ATCC 11170 / ATH 1.1.1 / DSM 467 / LMG 4362 / NCIMB 8255 / S1).